Consider the following 156-residue polypeptide: Small ribosomal subunit protein uS7 (156 aa).

It belongs to the universal ribosomal protein uS7 family. As to quaternary structure, part of the 30S ribosomal subunit. Contacts proteins S9 and S11.

In terms of biological role, one of the primary rRNA binding proteins, it binds directly to 16S rRNA where it nucleates assembly of the head domain of the 30S subunit. Is located at the subunit interface close to the decoding center, probably blocks exit of the E-site tRNA. The chain is Small ribosomal subunit protein uS7 from Alcanivorax borkumensis (strain ATCC 700651 / DSM 11573 / NCIMB 13689 / SK2).